We begin with the raw amino-acid sequence, 396 residues long: Elongation factor Tu (396 aa).

The 197-residue stretch at 10-206 (KPHVNVGTIG…ALDASIPEPK (197 aa)) folds into the tr-type G domain. The tract at residues 19–26 (GHVDHGKT) is G1. Residue 19 to 26 (GHVDHGKT) participates in GTP binding. Thr26 is a Mg(2+) binding site. The tract at residues 60–64 (GITIS) is G2. The segment at 81 to 84 (DCPG) is G3. GTP is bound by residues 81–85 (DCPGH) and 136–139 (NKAD). Residues 136–139 (NKAD) form a G4 region. The segment at 174–176 (SAL) is G5.

Belongs to the TRAFAC class translation factor GTPase superfamily. Classic translation factor GTPase family. EF-Tu/EF-1A subfamily. Monomer.

Its subcellular location is the cytoplasm. The enzyme catalyses GTP + H2O = GDP + phosphate + H(+). GTP hydrolase that promotes the GTP-dependent binding of aminoacyl-tRNA to the A-site of ribosomes during protein biosynthesis. The chain is Elongation factor Tu from Dichelobacter nodosus (strain VCS1703A).